The chain runs to 108 residues: Glutaredoxin-1 (108 aa).

The Glutaredoxin domain maps to 3 to 106 (EEFVQQRLAN…DILSSIGVLR (104 aa)). A disulfide bridge connects residues Cys23 and Cys26.

Belongs to the glutaredoxin family.

It localises to the virion. In terms of biological role, has thioltransferase and dehydroascorbate reductase activities. This is Glutaredoxin-1 (OPG075) from Ectromelia virus (strain Moscow) (ECTV).